A 963-amino-acid chain; its full sequence is Low-density lipoprotein receptor-related protein 8 (963 aa).

Positions 1–32 are cleaved as a signal peptide; sequence MGLPEPGPLRLLALLLLLLLLLLLQLQHLAAA. The Extracellular segment spans residues 42–826; sequence GPAKDCEKDQ…SKMGSTVTAA (785 aa). LDL-receptor class A domains lie at 46 to 82, 85 to 123, 126 to 164, 166 to 202, 205 to 246, 258 to 295, and 298 to 334; these read DCEK…DDCP, TCAD…ATCT, VCPA…AGCA, LCAP…RGCA, ACGP…ELCG, ACAT…ADCP, and TCRG…AGCL. 27 disulfides stabilise this stretch: C47–C59, C54–C72, C66–C81, C86–C98, C93–C111, C105–C122, C127–C141, C134–C154, C148–C163, C167–C179, C174–C192, C186–C201, C206–C221, C213–C234, C228–C245, C259–C272, C267–C285, C279–C294, C299–C311, C306–C324, C318–C333, C340–C351, C347–C360, C362–C374, C380–C390, C386–C399, and C401–C414. Residues W64, D67, D69, D71, D77, and E78 each contribute to the Ca(2+) site. N176 carries N-linked (GlcNAc...) asparagine glycosylation. The 40-residue stretch at 336-375 folds into the EGF-like 1 domain; sequence GLNECLHNNGGCSHICTDLKIGFECTCPAGFQLLDQKTCG. In terms of domain architecture, EGF-like 2; calcium-binding spans 376–415; that stretch reads DIDECKDPDACSQICVNYKGYFKCECYPGYEMDLLTKNCK. A glycan (N-linked (GlcNAc...) asparagine) is linked at N441. LDL-receptor class B repeat units lie at residues 462–508, 509–551, 552–595, 596–639, and 640–681; these read NRIY…DWVH, KHIY…DPLR, GFMY…DLLS, QRLY…VFED, and KVFW…FHEL. N-linked (GlcNAc...) asparagine glycans are attached at residues N518 and N538. Positions 740 to 798 are clustered O-linked oligosaccharides; it reads STSTTTLASTMTRTVPATTRAPGTTVHRSTYQNHSTETPSLTAAVPSSVSVPRAPSISP. The interval 754-815 is disordered; that stretch reads VPATTRAPGT…SNHSQHYANE (62 aa). Over residues 765–777 the composition is skewed to polar residues; that stretch reads VHRSTYQNHSTET. The N-linked (GlcNAc...) asparagine glycan is linked to N772. A compositionally biased stretch (low complexity) spans 778–799; the sequence is PSLTAAVPSSVSVPRAPSISPS. Residues 800 to 812 show a composition bias toward polar residues; the sequence is TLSPATSNHSQHY. N807 carries an N-linked (GlcNAc...) asparagine glycan. Residues 827–847 traverse the membrane as a helical segment; sequence VIGIIVPIVVIALLCMSGYLI. Residues 848–963 are Cytoplasmic-facing; it reads WRNWKRKNTK…ALSLEDDGLP (116 aa).

Belongs to the LDLR family. Homooligomer. Interacts with VLDLR. Reelin associates with two or more receptor molecules. Interacts with DAB1 and JNK-interacting proteins. Interacts with SNX17. Interacts with PCSK9. Interacts with MDK; this interaction is calcium dependent. Interacts with CLU. In terms of assembly, (Microbial infection) Interacts with Semliki Forest virus E2-E1 heterodimer; this interaction mediates viral entry to host cell. As to quaternary structure, (Microbial infection) Interacts (via class A repeats) with Eastern equine encephalitis virus spike glycoprotein E2; this interaction mediates viral entry into host cell. O-glycosylated. Some alternatively spliced isoforms lack the O-linked sugar domain. Post-translationally, undergoes sequential, furin and gamma-secretase dependent, proteolytic processing, resulting in the extracellular release of the entire ligand-binding domain as a soluble polypeptide and in the intracellular domain (ICD) release into the cytoplasm. The gamma-secretase-dependent proteolytical processing occurs after the bulk of the extracellular domain has been shed, in a furin-dependent manner, in alternatively spliced isoforms carrying the furin cleavage site. Hypoglycosylation (mainly hypo-O-glycosylation) leads to increased extracellular cleavage, which in turn results in accelerating release of the intracellular domain (ICD) by the gamma-secretase. The resulting receptor fragment is able to inhibit Reelin signaling and in particular the Reelin-induced DAB1 phosphorylation. In terms of processing, tyrosine phosphorylated upon apoE binding. Ubiquitinated by MYLIP leading to degradation. As to expression, expressed mainly in brain and placenta. Also expressed in platelets and megakaryocytic cells. Not expressed in the liver.

The protein localises to the cell membrane. Its subcellular location is the secreted. In terms of biological role, cell surface receptor for Reelin (RELN) and apolipoprotein E (apoE)-containing ligands. LRP8 participates in transmitting the extracellular Reelin signal to intracellular signaling processes, by binding to DAB1 on its cytoplasmic tail. Reelin acts via both the VLDL receptor (VLDLR) and LRP8 to regulate DAB1 tyrosine phosphorylation and microtubule function in neurons. LRP8 has higher affinity for Reelin than VLDLR. LRP8 is thus a key component of the Reelin pathway which governs neuronal layering of the forebrain during embryonic brain development. Binds the endoplasmic reticulum resident receptor-associated protein (RAP). Binds dimers of beta 2-glycoprotein I and may be involved in the suppression of platelet aggregation in the vasculature. Highly expressed in the initial segment of the epididymis, where it affects the functional expression of clusterin and phospholipid hydroperoxide glutathione peroxidase (PHGPx), two proteins required for sperm maturation. May also function as an endocytic receptor. Not required for endocytic uptake of SEPP1 in the kidney which is mediated by LRP2. Together with its ligand, apolipoprotein E (apoE), may indirectly play a role in the suppression of the innate immune response by controlling the survival of myeloid-derived suppressor cells. Its function is as follows. (Microbial infection) Acts as a receptor for Semliki Forest virus. The protein is Low-density lipoprotein receptor-related protein 8 (LRP8) of Homo sapiens (Human).